A 270-amino-acid polypeptide reads, in one-letter code: Fibroblast growth factor 5 (270 aa).

A signal peptide spans 1 to 20 (MSLSFLLLLFLSHLILSAWA). Positions 26 to 83 (LAPKGQPGPAATGRNPAGASSSRSSRGTTSSSSSSVSSSHSASLGNQGSGLEQSSFQW) are disordered. Residues 43–68 (GASSSRSSRGTTSSSSSSVSSSHSAS) show a composition bias toward low complexity. Over residues 69-83 (LGNQGSGLEQSSFQW) the composition is skewed to polar residues. Residue Asn-112 is glycosylated (N-linked (GlcNAc...) asparagine). Residues 236–257 (PEKKKPPSPVKPKVPLSAPRKS) form a disordered region.

It belongs to the heparin-binding growth factors family. Interacts with FGFR1 and FGFR2. Affinity between fibroblast growth factors (FGFs) and their receptors is increased by heparan sulfate glycosaminoglycans that function as coreceptors. As to expression, expressed in skin.

It is found in the secreted. Plays an important role in the regulation of cell proliferation and cell differentiation. Required for normal regulation of the hair growth cycle. Functions as an inhibitor of hair elongation by promoting progression from anagen, the growth phase of the hair follicle, into catagen the apoptosis-induced regression phase. The protein is Fibroblast growth factor 5 (FGF5) of Felis catus (Cat).